Consider the following 641-residue polypeptide: Threonine--tRNA ligase (641 aa).

A TGS domain is found at 1 to 61; it reads MPIITLPDGT…TQNSHIQIIT (61 aa). A catalytic region spans residues 242-533; that stretch reads DHRKLGKKYS…LIENYSGNFP (292 aa). Zn(2+)-binding residues include Cys333, His384, and His510.

It belongs to the class-II aminoacyl-tRNA synthetase family. Homodimer. It depends on Zn(2+) as a cofactor.

The protein localises to the cytoplasm. It carries out the reaction tRNA(Thr) + L-threonine + ATP = L-threonyl-tRNA(Thr) + AMP + diphosphate + H(+). Its function is as follows. Catalyzes the attachment of threonine to tRNA(Thr) in a two-step reaction: L-threonine is first activated by ATP to form Thr-AMP and then transferred to the acceptor end of tRNA(Thr). Also edits incorrectly charged L-seryl-tRNA(Thr). This is Threonine--tRNA ligase from Prochlorococcus marinus (strain NATL2A).